Consider the following 135-residue polypeptide: Ribosome-binding factor A (135 aa).

A disordered region spans residues 115–135; sequence VNEDKRKQQDSGREEDQAGEE. Residues 116–135 show a composition bias toward basic and acidic residues; it reads NEDKRKQQDSGREEDQAGEE.

Belongs to the RbfA family. Monomer. Binds 30S ribosomal subunits, but not 50S ribosomal subunits or 70S ribosomes.

It is found in the cytoplasm. Its function is as follows. One of several proteins that assist in the late maturation steps of the functional core of the 30S ribosomal subunit. Associates with free 30S ribosomal subunits (but not with 30S subunits that are part of 70S ribosomes or polysomes). Required for efficient processing of 16S rRNA. May interact with the 5'-terminal helix region of 16S rRNA. The protein is Ribosome-binding factor A of Vibrio campbellii (strain ATCC BAA-1116).